The chain runs to 637 residues: E3 ubiquitin-protein ligase CHFR (637 aa).

Residues 31–82 enclose the FHA domain; that stretch reads CTVGRKKDCDLSFPANKLVSGNHCKITHDQNSGKVWLEDMSTNGTVINMSKV. Disordered stretches follow at residues 120–172 and 193–267; these read ESAS…SSSL and SSSA…EGAT. A compositionally biased stretch (acidic residues) spans 130-142; that stretch reads GREEDSDLTETES. The span at 193 to 210 shows a compositional bias: polar residues; the sequence is SSSAVCKGDSTSSGSPAQ. The segment covering 258 to 267 has biased composition (basic and acidic residues); sequence SGKEKTEGAT. The RING-type zinc finger occupies 277 to 316; the sequence is CIICQDLLYDCISVQPCMHTFCAACYSGWMERSSFCPTCR. Positions 428 to 447 are disordered; the sequence is KTAGDGPSTSSDSTTAAPQE. Low complexity predominate over residues 429–445; the sequence is TAGDGPSTSSDSTTAAP. The PBZ-type zinc finger occupies 606 to 628; the sequence is PNCYWGRNCRTQVKAHHALKFNH.

This sequence belongs to the CHFR family.

It localises to the nucleus. It is found in the PML body. The enzyme catalyses S-ubiquitinyl-[E2 ubiquitin-conjugating enzyme]-L-cysteine + [acceptor protein]-L-lysine = [E2 ubiquitin-conjugating enzyme]-L-cysteine + N(6)-ubiquitinyl-[acceptor protein]-L-lysine.. It participates in protein modification; protein ubiquitination. Its function is as follows. E3 ubiquitin-protein ligase that functions in the antephase checkpoint by actively delaying passage into mitosis in response to microtubule poisons. Acts in early prophase before chromosome condensation, when the centrosome move apart from each other along the periphery of the nucleus. Probably involved in signaling the presence of mitotic stress caused by microtubule poisons by mediating the 'Lys-48'-linked ubiquitination of target proteins, leading to their degradation by the proteasome. May also promote the formation of 'Lys-63'-linked polyubiquitin chains and functions with the specific ubiquitin-conjugating ubc13-mms2 (ube2n-ube2v2) heterodimer. Substrates that are polyubiquitinated at 'Lys-63' are usually not targeted for degradation, but are rather involved in signaling cellular stress. The sequence is that of E3 ubiquitin-protein ligase CHFR (chfr) from Danio rerio (Zebrafish).